Reading from the N-terminus, the 248-residue chain is Ribonuclease PH (248 aa).

Phosphate contacts are provided by residues Arg-86 and 124–126 (GTR).

The protein belongs to the RNase PH family. As to quaternary structure, homohexameric ring arranged as a trimer of dimers.

It catalyses the reaction tRNA(n+1) + phosphate = tRNA(n) + a ribonucleoside 5'-diphosphate. Its function is as follows. Phosphorolytic 3'-5' exoribonuclease that plays an important role in tRNA 3'-end maturation. Removes nucleotide residues following the 3'-CCA terminus of tRNAs; can also add nucleotides to the ends of RNA molecules by using nucleoside diphosphates as substrates, but this may not be physiologically important. Probably plays a role in initiation of 16S rRNA degradation (leading to ribosome degradation) during starvation. This Clostridium perfringens (strain ATCC 13124 / DSM 756 / JCM 1290 / NCIMB 6125 / NCTC 8237 / Type A) protein is Ribonuclease PH.